The primary structure comprises 877 residues: Dystroglycan 1 (877 aa).

A signal peptide spans 1–29 (MRMSAGLSLLIPLWGRTFLLLLSVAVTQS). Residues 30–408 (RWPSEPSDAV…GHIRPTMTIP (379 aa)) are required for laminin recognition. Positions 49–71 (SMHSVLSDLHEAVPTVVGIPDGT) are O-glycosylated at one site. An N-linked (GlcNAc...) asparagine glycan is attached at Asn141. Cysteines 182 and 264 form a disulfide. Residues 316 to 468 (ATPTPVTAIG…PPTRIRTTTS (153 aa)) form a mucin-like domain region. 3 O-linked (Man6P...) threonine glycosylation sites follow: Thr317, Thr319, and Thr379. Disordered regions lie at residues 380–444 (PTLG…PVPR) and 458–480 (SPPT…QRPE). Low complexity predominate over residues 413 to 433 (PTAVATPPTPTTKNPRVSXPT). The interval 446-468 (TTKAPITRLETASPPTRIRTTTS) is O-glycosylated at seven sites with GalNAc. Residues 585–694 (RAPARFTAKF…MSIAVTGSGS (110 aa)) form the Peptidase S72 domain. N-linked (GlcNAc...) asparagine glycans are attached at residues Asn623, Asn631, and Asn643. A disulfide bridge connects residues Cys651 and Cys695. Pro residues predominate over residues 706–717 (PKRVPSEAPPTE). Positions 706 to 727 (PKRVPSEAPPTEVPDRDPEKSS) are disordered. Positions 718–727 (VPDRDPEKSS) are enriched in basic and acidic residues. Residues 732 to 757 (YLHTVIPAVVVAAILLIAGIIAMICY) form a helical membrane-spanning segment. The Nuclear localization signal signature appears at 758 to 764 (RKKRKGK). The residue at position 772 (Thr772) is a Phosphothreonine. A required for interaction with CAV3 region spans residues 801 to 877 (LQEEKAPLPP…YRSPPPYVPP (77 aa)). A disordered region spans residues 805–877 (KAPLPPPEYP…YRSPPPYVPP (73 aa)). Over residues 814–828 (PNQSVPETTPLNQDT) the composition is skewed to polar residues. The segment covering 841–852 (NAPPYQPPPPFT) has biased composition (pro residues). The required for binding DMD and UTRN stretch occupies residues 862-877 (PKNMTPYRSPPPYVPP). The PPXY motif motif lies at 871 to 874 (PPPY). Phosphotyrosine; by SRC is present on Tyr874.

Monomer. Heterodimer of alpha- and beta-dystroglycan subunits which are the central components of the dystrophin-glycoprotein complex. This complex then can form a dystrophin-associated glycoprotein complex (DGC) which is composed of three subcomplexes: a cytoplasmic complex comprised of DMD (or UTRN), DTNA and a number of syntrophins, such as SNTB1, SNTB2, SNTG1 and SNTG2, the transmembrane dystroglycan complex, and the sarcoglycan-sarcospan complex. Interacts (via the N-terminal of alphaDAG1) with LARGE1; the interaction enhances laminin binding. Interacts with SGCD. Interacts with AGR2 and AGR3. Interacts (betaDAG1) with DMD; the interaction is inhibited by phosphorylation on the PPXY motif. Interacts (betaDAG1, via its PPXY motif) with UTRN (via its WWW and ZZ domains); the interaction is inhibited by phosphorylation on the PPXY motif. Interacts (betaDAG1, via its phosphorylated PPXY motif) with the SH2 domain-containing proteins, FYN, CSK, NCK and SHC. Interacts (betaDAG1) with CAV3 (via a central WW-like domain); the interaction disrupts the binding of DMD. BetaDAG1 directly interacts with ANK3, but not with ANK2; this interaction does not interfere with DMD-binding and is required for retention at costameres. Identified in a dystroglycan complex that contains at least PRX, DRP2, UTRN, DMD and DAG1. Interacts with POMGNT1. BetaDAG1 interacts with CD93. Post-translationally, O-glycosylated. POMGNT1 catalyzes the initial addition of N-acetylglucosamine, giving rise to the GlcNAc(beta1-2)Man(alpha1-)O-Ser/Thr moiety and thus providing the necessary basis for the addition of further carbohydrate moieties. Heavily O-glycosylated comprising of up to two thirds of its mass and the carbohydrate composition differs depending on tissue type. Mucin-type O-glycosylation is important for ligand binding activity. O-mannosylation of alpha-DAG1 is found in high abundance in both brain and muscle where the most abundant glycan is Sia-alpha-2-3-Gal-beta-1-4-Glc-NAc-beta-1-2-Man. In muscle, glycosylation on Thr-317, Thr-319 and Thr-379 by a phosphorylated O-mannosyl glycan with the structure 2-(N-acetylamido)-2-deoxygalactosyl-beta-1,3-2-(N-acetylamido)-2-deoxyglucosyl-beta-1,4-6-phosphomannose is mediated by like-acetylglucosaminyltransferase (LARGE1) protein amd is required for laminin binding. O-glycosylated in the N-terminal region with a core 1 or possibly core 8 glycan. The brain form displays a unique glycosylation pattern which is absent in other tissues; this form shows enhanced binding to laminin LAMA5 compared to the skeletal muscle form. N-glycosylated. In terms of processing, autolytic cleavage produces the alpha and beta subunits. In cutaneous cells, as well as in certain pathological conditions, shedding of beta-dystroglycan can occur releasing a peptide of about 30 kDa. Post-translationally, SRC-mediated phosphorylation of the PPXY motif of the beta subunit recruits SH2 domain-containing proteins, but inhibits binding to WWW domain-containing proteins, DMD and UTRN. This phosphorylation also inhibits nuclear entry.

Its subcellular location is the secreted. The protein localises to the extracellular space. The protein resides in the cell membrane. It localises to the cytoplasm. It is found in the cytoskeleton. Its subcellular location is the nucleus. The protein localises to the nucleoplasm. The protein resides in the sarcolemma. It localises to the postsynaptic cell membrane. Its function is as follows. The dystroglycan complex is involved in a number of processes including laminin and basement membrane assembly, sarcolemmal stability, cell survival, peripheral nerve myelination, nodal structure, cell migration, and epithelial polarization. Extracellular peripheral glycoprotein that acts as a receptor for extracellular matrix proteins containing laminin-G domains. Receptor for laminin-2 (LAMA2) and agrin in peripheral nerve Schwann cells. Also acts as a receptor for laminin LAMA5. Functionally, transmembrane protein that plays important roles in connecting the extracellular matrix to the cytoskeleton. Acts as a cell adhesion receptor in both muscle and non-muscle tissues. Receptor for both DMD and UTRN and, through these interactions, scaffolds axin to the cytoskeleton. Also functions in cell adhesion-mediated signaling and implicated in cell polarity. The sequence is that of Dystroglycan 1 from Sus scrofa (Pig).